The following is a 122-amino-acid chain: Basic phospholipase A2 LmTX-I (122 aa).

6 disulfide bridges follow: cysteine 26–cysteine 115, cysteine 28–cysteine 44, cysteine 43–cysteine 95, cysteine 49–cysteine 122, cysteine 50–cysteine 88, and cysteine 75–cysteine 86. Tyrosine 27, glycine 29, and glycine 31 together coordinate Ca(2+). Residue histidine 47 is part of the active site. Aspartate 48 provides a ligand contact to Ca(2+). Aspartate 89 is an active-site residue.

Monomer. It depends on Ca(2+) as a cofactor. Expressed by the venom gland.

It is found in the secreted. The enzyme catalyses a 1,2-diacyl-sn-glycero-3-phosphocholine + H2O = a 1-acyl-sn-glycero-3-phosphocholine + a fatty acid + H(+). With respect to regulation, inhibited by Mn(2+), Mg(2+), Zn(2+) and Cu(2+). Snake venom phospholipase A2 (PLA2) that displays neurotoxic and myotoxic activities. Induces inflammatory edema by mechanisms involving mast cell activation and arachidonic acid metabolites. Increases plasma creatine kinase activity. PLA2 catalyzes the calcium-dependent hydrolysis of the 2-acyl groups in 3-sn-phosphoglycerides. This chain is Basic phospholipase A2 LmTX-I, found in Lachesis muta muta (Bushmaster).